A 147-amino-acid polypeptide reads, in one-letter code: Pathogenesis-related protein PR-4B (147 aa).

Residues 1–25 form the signal peptide; that stretch reads MERVNNYKLCVALLIMSVMMAMAAA. The 122-residue stretch at 26 to 147 folds into the Barwin domain; it reads QSATNVRSTY…VNYEFVNCND (122 aa). Intrachain disulfides connect C54-C86, C75-C109, and C89-C145.

It is found in the secreted. It localises to the cell wall. This is Pathogenesis-related protein PR-4B from Nicotiana tabacum (Common tobacco).